The primary structure comprises 379 residues: ORC1-type DNA replication protein 2 (379 aa).

ATP is bound by residues 69–73 (TGKTT), Tyr211, and Arg223.

It belongs to the CDC6/cdc18 family. As to quaternary structure, interacts with MCM. In terms of processing, autophosphorylated on a serine. Phosphorylation is inhibited by binding to MCM. Both single-stranded DNA and double-stranded DNA inhibit the phosphorylation reaction.

Its function is as follows. Involved in regulation of DNA replication. Dissociates the MCM complex and inhibits the MCM helicase activity, suggesting that it may function as a helicase loader. Binds to both specific and random double-stranded or single-stranded DNA. The polypeptide is ORC1-type DNA replication protein 2 (cdc6-2) (Methanothermobacter thermautotrophicus (strain ATCC 29096 / DSM 1053 / JCM 10044 / NBRC 100330 / Delta H) (Methanobacterium thermoautotrophicum)).